A 128-amino-acid chain; its full sequence is Large ribosomal subunit protein eL22 (128 aa).

Belongs to the eukaryotic ribosomal protein eL22 family. Component of the large ribosomal subunit.

The protein localises to the cytoplasm. Its function is as follows. Component of the large ribosomal subunit. The ribosome is a large ribonucleoprotein complex responsible for the synthesis of proteins in the cell. In Ictalurus punctatus (Channel catfish), this protein is Large ribosomal subunit protein eL22 (rpl22).